The sequence spans 170 residues: Urease accessory protein UreE (170 aa).

This sequence belongs to the UreE family.

It localises to the cytoplasm. Functionally, involved in urease metallocenter assembly. Binds nickel. Probably functions as a nickel donor during metallocenter assembly. This Helicobacter acinonychis (strain Sheeba) protein is Urease accessory protein UreE.